A 236-amino-acid chain; its full sequence is MLNPNIFHMPKIIIALDFCNKKSAMKLVNLLNPSIFYLKIGKEMFTILGCKFVKELHQLGFNIFLDLKFHDIPNTVFNATKAAADLGIWMLSVHASGGKEMLISAKKALKSFKKAPLLIAVTALTSFKEEALKEIGINISLTEYILKLSKLSNDCGLDGIVCPGKEAKKIKFLFGNKYKIITPGIRIAKDLLYDQNNIITPKKAKEYKIDYIVIGRSITMSKNPIKKLDLIIKSMQ.

Residues Asp-17, Lys-39, 66–75 (DLKFHDIPNT), Thr-125, Arg-186, Gln-195, Gly-215, and Arg-216 contribute to the substrate site. The active-site Proton donor is Lys-68.

It belongs to the OMP decarboxylase family. Type 1 subfamily. In terms of assembly, homodimer.

It carries out the reaction orotidine 5'-phosphate + H(+) = UMP + CO2. Its pathway is pyrimidine metabolism; UMP biosynthesis via de novo pathway; UMP from orotate: step 2/2. Functionally, catalyzes the decarboxylation of orotidine 5'-monophosphate (OMP) to uridine 5'-monophosphate (UMP). This chain is Orotidine 5'-phosphate decarboxylase, found in Buchnera aphidicola subsp. Acyrthosiphon pisum (strain 5A).